The chain runs to 1140 residues: TBC1 domain family member 8 (1140 aa).

2 consecutive GRAM domains span residues 145–212 (VKFE…ERTS) and 285–353 (EFFR…EKME). Residues 505–692 (GIPESLRGRL…NVVDCFFYDG (188 aa)) form the Rab-GAP TBC domain. The interval 1031-1070 (GQRGSSSGSCSQECGEELRASAPSPEDSVFADTGKTPQDS) is disordered. Positions 1032-1043 (QRGSSSGSCSQE) are enriched in low complexity.

Functionally, may act as a GTPase-activating protein for Rab family protein(s). This chain is TBC1 domain family member 8 (TBC1D8), found in Homo sapiens (Human).